The primary structure comprises 423 residues: ER-bound oxygenase mpaB' (423 aa).

Topologically, residues 1 to 22 (MSLSLPPALSELARALPYSRTQ) are lumenal. Residues 23–41 (WLPILVGFLIGYPLLIKAL) form a helical membrane-spanning segment. The Cytoplasmic segment spans residues 42–423 (RYKRLGEMKK…ISRTGKCPFH (382 aa)).

This sequence belongs to the mpaB oxygenase family.

The protein resides in the endoplasmic reticulum membrane. It carries out the reaction 4-farnesyl-3,5-dihydroxy-6-methylphthalide + AH2 + 2 O2 = (4E,8E)-10-(4,6-dihydroxy-7-methyl-3-oxo-1,3-dihydro-2-benzofuran-5-yl)-4,8-dimethyldeca-4,8-dienoate + acetone + A + H2O + H(+). It participates in secondary metabolite biosynthesis; terpenoid biosynthesis. Functionally, ER-bound oxygenase; part of the gene cluster that mediates the biosynthesis of mycophenolic acid (MPA), the first isolated antibiotic natural product in the world obtained from a culture of Penicillium brevicompactum in 1893. MpaB' catalyzes the oxidative cleavage the C19-C20 double bond in farnesyl-DHMP (FDHMP) to yield FDHMP-3C via a mycophenolic aldehyde intermediate. The first step of the pathway is the synthesis of 5-methylorsellinic acid (5MOA) by the cytosolic polyketide synthase mpaC. 5MOA is then converted to the phthalide compound 5,7-dihydroxy-4,6-dimethylphthalide (DHMP) by the endoplasmic reticulum-bound cytochrome P450 monooxygenase mpaDE. MpaDE first catalyzes hydroxylation of 5-MOA to 4,6-dihydroxy-2-(hydroxymethyl)-3-methylbenzoic acid (DHMB). MpaDE then acts as a lactone synthase that catalyzes the ring closure to convert DHMB into DHMP. The next step is the prenylation of DHMP by the Golgi apparatus-associated prenyltransferase mpaA to yield farnesyl-DHMP (FDHMP). The ER-bound oxygenase mpaB then mediates the oxidative cleavage the C19-C20 double bond in FDHMP to yield FDHMP-3C via a mycophenolic aldehyde intermediate. The O-methyltransferase mpaG catalyzes the methylation of FDHMP-3C to yield MFDHMP-3C. After the cytosolic methylation of FDHMP-3C, MFDHMP-3C enters into peroxisomes probably via free diffusion due to its low molecular weight. Upon a peroxisomal CoA ligation reaction, catalyzed by a beta-oxidation component enzyme acyl-CoA ligase ACL891, MFDHMP-3C-CoA would then be restricted to peroxisomes for the following beta-oxidation pathway steps. The peroxisomal beta-oxidation machinery than converts MFDHMP-3C-CoA into MPA_CoA, via a beta-oxidation chain-shortening process. Finally mpaH acts as a peroxisomal acyl-CoA hydrolase with high substrate specificity toward MPA-CoA to release the final product MPA. The protein is ER-bound oxygenase mpaB' of Penicillium brevicompactum.